The following is a 135-amino-acid chain: Hemoglobin subunit alpha (135 aa).

The region spanning 1–135 (AAVVALWGKI…VALALAERYK (135 aa)) is the Globin domain. Histidine 52 serves as a coordination point for O2. Residue histidine 81 coordinates heme b.

Belongs to the globin family. Hb1 is a heterotetramer of two alpha chains and two beta-1 chains. Hb2 is a heterotetramer of two alpha chains and two beta-2 chains. Post-translationally, the N-terminus is blocked. In terms of tissue distribution, red blood cells.

Its function is as follows. Involved in oxygen transport from gills to the various peripheral tissues. The sequence is that of Hemoglobin subunit alpha from Dissostichus eleginoides (Patagonian toothfish).